We begin with the raw amino-acid sequence, 538 residues long: Syncytin-2 (538 aa).

Residues 1–15 form the signal peptide; that stretch reads MGLLLLVLILTPSLA. Over 16-478 the chain is Extracellular; it reads AYRHPDFPLL…GWLNWEGTWK (463 aa). The CXXC motif lies at 43 to 46; that stretch reads CWLC. 3 disulfide bridges follow: cysteine 43/cysteine 46, cysteine 43/cysteine 439, and cysteine 431/cysteine 438. 8 N-linked (GlcNAc...) asparagine glycosylation sites follow: asparagine 133, asparagine 146, asparagine 177, asparagine 220, asparagine 241, asparagine 247, asparagine 312, and asparagine 332. Residues 354–374 are fusion peptide; that stretch reads FIPLLAGLGILAGTGTGIAGI. The short motif at 414-430 is the CKS-17 element; the sequence is LQNRRGLDMLTAAQGGI. Residues 431–439 carry the CX6CC motif; sequence CLALDEKCC. Asparagine 443 carries an N-linked (GlcNAc...) asparagine glycan. Residues 479–499 form a helical membrane-spanning segment; that stretch reads WFSWVLPLTGPLVSLLLLLLF. Topologically, residues 500–538 are cytoplasmic; sequence GPCLLNLITQFVSSRLQAIKLQTNLSAGRHPRNIQESPF.

This sequence belongs to the gamma type-C retroviral envelope protein family. HERV class-I FRD env subfamily. In terms of assembly, the surface and transmembrane proteins form a heterodimer. They are attached by non-covalent interactions or by a labile interchain disulfide bond. In terms of processing, specific enzymatic cleavages in vivo yield the mature SU and TM proteins. The CXXC motif is highly conserved across a broad range of retroviral envelope proteins. It is thought to participate in the formation of a labile disulfide bond possibly with the CX6CC motif present in the transmembrane protein.

The protein localises to the virion. Its subcellular location is the cell membrane. Functionally, this endogenous retroviral envelope protein has retained its original fusogenic properties and participates in trophoblast fusion and the formation of a syncytium during placenta morphogenesis. The interaction with MFSD2A is apparently important for this process. Its function is as follows. Endogenous envelope proteins may have kept, lost or modified their original function during evolution but this one can still make pseudotypes with MLV, HIV-1 or SIV-1 virions and confer infectivity. Retroviral envelope proteins mediate receptor recognition and membrane fusion during early infection. The surface protein mediates receptor recognition, while the transmembrane protein anchors the envelope heterodimer to the viral membrane through one transmembrane domain. The other hydrophobic domain, called fusion peptide, mediates fusion of the viral membrane with the target cell membrane. This Pan troglodytes (Chimpanzee) protein is Syncytin-2 (ERVFRD-1).